Reading from the N-terminus, the 428-residue chain is G2/mitotic-specific cyclin-1 (428 aa).

Residues 1 to 22 (MKFSEEKNVSNNPTNFEGGLDS) form a disordered region.

Belongs to the cyclin family. Cyclin AB subfamily. Interacts with the CDC2 protein kinase to form a serine/threonine kinase holoenzyme complex also known as maturation promoting factor (MPF). The cyclin subunit imparts substrate specificity to the complex.

In terms of biological role, essential for the control of the cell cycle at the G2/M (mitosis) transition. The protein is G2/mitotic-specific cyclin-1 of Medicago sativa subsp. varia (Alfalfa).